We begin with the raw amino-acid sequence, 160 residues long: SsrA-binding protein (160 aa).

Positions 133 to 160 (KKEHDKREDLKEREWQRDKERMMKNKGR) are disordered.

It belongs to the SmpB family.

The protein localises to the cytoplasm. In terms of biological role, required for rescue of stalled ribosomes mediated by trans-translation. Binds to transfer-messenger RNA (tmRNA), required for stable association of tmRNA with ribosomes. tmRNA and SmpB together mimic tRNA shape, replacing the anticodon stem-loop with SmpB. tmRNA is encoded by the ssrA gene; the 2 termini fold to resemble tRNA(Ala) and it encodes a 'tag peptide', a short internal open reading frame. During trans-translation Ala-aminoacylated tmRNA acts like a tRNA, entering the A-site of stalled ribosomes, displacing the stalled mRNA. The ribosome then switches to translate the ORF on the tmRNA; the nascent peptide is terminated with the 'tag peptide' encoded by the tmRNA and targeted for degradation. The ribosome is freed to recommence translation, which seems to be the essential function of trans-translation. This chain is SsrA-binding protein, found in Tolumonas auensis (strain DSM 9187 / NBRC 110442 / TA 4).